Reading from the N-terminus, the 218-residue chain is MAEISRIQYEMEYTEGISQRMRVPEKLKVAPPNADLEQGFQEGVSNASVIMQVPERIVVAGNNEDIPFSRPADLDLIQSTPFKPLALKTPPRVLTLSERPLDFLDLERPAPTPQNEEIRAVGRLKRERSMSENAVRQNGQLVKTDSMYGISNIDAMIEGTSEDMTVVDAASLRRQIIKLNRRLQLLEEENKERAKREMVMYSITVAFWLLNSWLWFRR.

The Cytoplasmic portion of the chain corresponds to 1-198 (MAEISRIQYE…ENKERAKREM (198 aa)). Threonine 89 is modified (phosphothreonine). A phosphoserine mark is found at serine 129, serine 131, serine 146, and serine 171. Positions 167–198 (VDAASLRRQIIKLNRRLQLLEEENKERAKREM) form a coiled coil. Residues 199–216 (VMYSITVAFWLLNSWLWF) form a helical; Anchor for type IV membrane protein membrane-spanning segment. The Mitochondrial intermembrane segment spans residues 217 to 218 (RR).

It belongs to the Tango11 family. In terms of assembly, homodimer. Interacts with DNM1L. Interacts with C11orf65/MFI; the interaction inhibits MFF interaction with DNM1L.

It is found in the mitochondrion outer membrane. The protein resides in the peroxisome. It localises to the cytoplasmic vesicle. Its subcellular location is the secretory vesicle. The protein localises to the synaptic vesicle. Functionally, plays a role in mitochondrial and peroxisomal fission. Promotes the recruitment and association of the fission mediator dynamin-related protein 1 (DNM1L) to the mitochondrial surface. May be involved in regulation of synaptic vesicle membrane dynamics by recruitment of DNM1L to clathrin-containing vesicles. This is Mitochondrial fission factor (MFF) from Bos taurus (Bovine).